The sequence spans 128 residues: Aspartate 1-decarboxylase (128 aa).

Ser-25 (schiff-base intermediate with substrate; via pyruvic acid) is an active-site residue. A Pyruvic acid (Ser) modification is found at Ser-25. Thr-57 is a substrate binding site. Tyr-58 functions as the Proton donor in the catalytic mechanism. Substrate is bound at residue 73–75; that stretch reads GAA.

This sequence belongs to the PanD family. In terms of assembly, heterooctamer of four alpha and four beta subunits. Requires pyruvate as cofactor. In terms of processing, is synthesized initially as an inactive proenzyme, which is activated by self-cleavage at a specific serine bond to produce a beta-subunit with a hydroxyl group at its C-terminus and an alpha-subunit with a pyruvoyl group at its N-terminus.

Its subcellular location is the cytoplasm. The enzyme catalyses L-aspartate + H(+) = beta-alanine + CO2. It participates in cofactor biosynthesis; (R)-pantothenate biosynthesis; beta-alanine from L-aspartate: step 1/1. Catalyzes the pyruvoyl-dependent decarboxylation of aspartate to produce beta-alanine. The polypeptide is Aspartate 1-decarboxylase (Chlorobaculum parvum (strain DSM 263 / NCIMB 8327) (Chlorobium vibrioforme subsp. thiosulfatophilum)).